Here is a 1939-residue protein sequence, read N- to C-terminus: Myosin-4 (1939 aa).

Residues 33–82 (DAKTSVFVVDPKESYVKAIVQSREGGKVTAKTEAGATVTVKEDQVFSMNP) form the Myosin N-terminal SH3-like domain. Residues T64 and T69 each carry the phosphothreonine modification. At S79 the chain carries Phosphoserine. Residues 86–782 (DKIEDMAMMT…LLGTLEEMRD (697 aa)) enclose the Myosin motor domain. Residue K130 is modified to N6,N6,N6-trimethyllysine. Position 179-186 (179-186 (GESGAGKT)) interacts with ATP. At Y389 the chain carries Phosphotyrosine. A Phosphothreonine modification is found at T391. Residue S392 is modified to Phosphoserine. Phosphothreonine is present on T419. Y424 carries the phosphotyrosine modification. S625 bears the Phosphoserine mark. Residues 659–681 (LNKLMTNLRSTHPHFVRCIIPNE) are actin-binding. H757 carries the post-translational modification Pros-methylhistidine. The tract at residues 761–775 (KFGHTKVFFKAGLLG) is actin-binding. T776 carries the post-translational modification Phosphothreonine. The IQ domain maps to 785–814 (LAQLITRTQAICRGFLMRVEFRKMMERRES). Residues 843–1939 (LLKSAETEKE…EVHTKVISEE (1097 aa)) are a coiled coil. S1092, S1162, and S1237 each carry phosphoserine. Position 1241 is a phosphothreonine (T1241). S1243 bears the Phosphoserine mark. T1255 bears the Phosphothreonine mark. S1261 carries the post-translational modification Phosphoserine. The residue at position 1265 (T1265) is a Phosphothreonine. Position 1278 is a phosphoserine (S1278). T1286 carries the post-translational modification Phosphothreonine. Phosphoserine is present on residues S1288, S1292, S1303, S1306, and S1413. A Phosphotyrosine modification is found at Y1464. Phosphothreonine is present on T1467. At S1474 the chain carries Phosphoserine. Residue Y1492 is modified to Phosphotyrosine. At S1495 the chain carries Phosphoserine. T1501 carries the post-translational modification Phosphothreonine. Residue S1514 is modified to Phosphoserine. T1517 is modified (phosphothreonine). Phosphoserine is present on residues S1542, S1547, S1554, S1574, S1600, S1603, S1714, and S1726. 2 positions are modified to phosphothreonine: T1730 and T1736. S1739 is modified (phosphoserine).

The protein belongs to the TRAFAC class myosin-kinesin ATPase superfamily. Myosin family. Muscle myosin is a hexameric protein that consists of 2 heavy chain subunits (MHC), 2 alkali light chain subunits (MLC) and 2 regulatory light chain subunits (MLC-2).

It is found in the cytoplasm. Its subcellular location is the myofibril. In terms of biological role, muscle contraction. This is Myosin-4 (MYH4) from Homo sapiens (Human).